The chain runs to 282 residues: Pantothenate synthetase (282 aa).

ATP is bound at residue 30–37 (MGYLHEGH). The active-site Proton donor is His37. A (R)-pantoate-binding site is contributed by Gln61. Beta-alanine is bound at residue Gln61. 147-150 (GMKD) is an ATP binding site. Gln153 serves as a coordination point for (R)-pantoate. ATP is bound by residues Val176 and 184–187 (KSSR).

This sequence belongs to the pantothenate synthetase family. As to quaternary structure, homodimer.

It localises to the cytoplasm. The catalysed reaction is (R)-pantoate + beta-alanine + ATP = (R)-pantothenate + AMP + diphosphate + H(+). Its pathway is cofactor biosynthesis; (R)-pantothenate biosynthesis; (R)-pantothenate from (R)-pantoate and beta-alanine: step 1/1. Catalyzes the condensation of pantoate with beta-alanine in an ATP-dependent reaction via a pantoyl-adenylate intermediate. In Bacillus cereus (strain AH187), this protein is Pantothenate synthetase.